The primary structure comprises 180 residues: Formate hydrogenlyase subunit 6 (180 aa).

2 4Fe-4S ferredoxin-type domains span residues 31 to 60 (GKPE…VETD) and 66 to 95 (LAWE…LSQE). [4Fe-4S] cluster-binding residues include Cys-40, Cys-43, Cys-46, Cys-50, Cys-75, Cys-78, Cys-81, and Cys-85.

FHL comprises of a formate dehydrogenase, unidentified electron carriers and a hydrogenase (isoenzyme 3). In this non-energy conserving pathway, molecular hydrogen and carbodioxide are released from formate.

Probable electron transfer protein for hydrogenase 3. This is Formate hydrogenlyase subunit 6 (hycF) from Escherichia coli (strain K12).